The primary structure comprises 231 residues: Caspase-like protein (231 aa).

This sequence belongs to the peptidase C14A family.

In Trichoplusia ni ascovirus 2c (TnAV-2c), this protein is Caspase-like protein.